A 691-amino-acid chain; its full sequence is Lipase 2 (691 aa).

The N-terminal stretch at 1 to 37 (MLRGQEERKYSIRKYSIGVVSVLAATMFVVTSHEAQA) is a signal peptide. The segment at 34–267 (EAQASEKIPT…KPTDKNTDNK (234 aa)) is disordered. Positions 38–296 (SEKIPTTNAA…ADAKKVRPLK (259 aa)) are excised as a propeptide. Residues 41–72 (IPTTNAAAQKETLNQPGEQGNAITSHQMQSGK) show a composition bias toward polar residues. Positions 73 to 82 (QLDDMHKENG) are enriched in basic and acidic residues. 4 stretches are compositionally biased toward polar residues: residues 94 to 115 (LQSS…NDNQ), 125 to 135 (SKQSHQNNATN), 142 to 172 (DQIQ…QPSI), and 186 to 196 (PTSTTPPSNDK). Basic and acidic residues-rich tracts occupy residues 197–214 (TAPK…KHPN) and 258–267 (KPTDKNTDNK). Ser-413 acts as the Nucleophile in catalysis. Gly-580 contributes to the Ca(2+) binding site. Asp-604 (charge relay system) is an active-site residue. Asp-645 provides a ligand contact to Ca(2+). His-646 functions as the Charge relay system in the catalytic mechanism. Residues Asp-648, Asp-653, and Asp-656 each contribute to the Ca(2+) site.

The protein belongs to the AB hydrolase superfamily. Lipase family.

Its subcellular location is the secreted. It carries out the reaction a triacylglycerol + H2O = a diacylglycerol + a fatty acid + H(+). In Staphylococcus aureus (strain MRSA252), this protein is Lipase 2 (lip2).